The sequence spans 2019 residues: Sodium channel protein type 5 subunit alpha (2019 aa).

Residues 1 to 129 (MANFLLPRGT…VRRAAVKILV (129 aa)) lie on the Cytoplasmic side of the membrane. Residues 27–66 (RMAEKQARGSATSQESREGLPEEEAPRPQLDLQASKKLPD) are disordered. Position 36 is a phosphoserine (Ser36). Phosphothreonine is present on Thr38. The span at 41–52 (ESREGLPEEEAP) shows a compositional bias: basic and acidic residues. An I repeat occupies 113–420 (VLSPFHPVRR…VVAMAYEEQN (308 aa)). A helical membrane pass occupies residues 130–149 (HSLFSMLIMCTILTNCVFMA). Residues 150 to 157 (QHDPPPWT) lie on the Extracellular side of the membrane. A helical transmembrane segment spans residues 158–179 (KYVEYTFTAIYTFESLVKILAR). Residues 180 to 188 (GFCLHAFTF) are Cytoplasmic-facing. The helical transmembrane segment at 189-209 (LRDPWNWLDFSVIVMAYTTEF) threads the bilayer. Residues 210–216 (VDLGNVS) lie on the Extracellular side of the membrane. N-linked (GlcNAc...) asparagine glycosylation is present at Asn214. The helical transmembrane segment at 217–236 (ALRTFRVLRALKTISVISGL) threads the bilayer. Residues 237–249 (KTIVGALIQSVKK) are Cytoplasmic-facing. The chain crosses the membrane as a helical span at residues 250–272 (LADVMVLTVFCLSVFALIGLQLF). At 273 to 357 (MGNLRHKCVR…PDHGYTSFDS (85 aa)) the chain is on the extracellular side. A disulfide bridge links Cys280 with Cys335. 5 N-linked (GlcNAc...) asparagine glycosylation sites follow: Asn283, Asn288, Asn291, Asn318, and Asn328. The segment at residues 358 to 378 (FAWAFLALFRLMTQDCWERLY) is an intramembrane region (pore-forming). The Extracellular segment spans residues 379–386 (QQTLRSAG). A helical membrane pass occupies residues 387–413 (KIYMIFFMLVIFLGSFYLVNLILAVVA). Residues 414–719 (MAYEEQNQAT…VKFVVMDPFA (306 aa)) are Cytoplasmic-facing. Phosphoserine occurs at positions 457, 460, 483, and 484. 2 disordered regions span residues 461–575 (LEMS…TQGQ) and 610–647 (EATS…TPQA). Thr486 carries the post-translational modification Phosphothreonine. The span at 491–503 (DDRLPKSDSEDGP) shows a compositional bias: basic and acidic residues. Ser497 and Ser510 each carry phosphoserine. Over residues 507 to 528 (NQLSLTHGLSRTSMRPRSSRGS) the composition is skewed to polar residues. Arg526 is modified (dimethylated arginine; alternate). Position 526 is an omega-N-methylarginine; alternate (Arg526). Phosphoserine is present on residues Ser539 and Ser571. Residues Ser664 and Ser667 each carry the phosphoserine modification. The stretch at 699 to 971 (CCPLWMSIKQ…QLALARIQRG (273 aa)) is one II repeat. The helical transmembrane segment at 720-737 (DLTITMCIVLNTLFMALE) threads the bilayer. At 738-746 (HYNMTAEFE) the chain is on the extracellular side. Asn740 is a glycosylation site (N-linked (GlcNAc...) asparagine). The chain crosses the membrane as a helical span at residues 747–769 (EMLQVGNLVFTGIFTAEMTFKII). Residues 770 to 775 (ALDPYY) lie on the Cytoplasmic side of the membrane. The helical transmembrane segment at 776–796 (YFQQGWNIFDSIIVILSLMEL) threads the bilayer. At 797–806 (GLSRMGNLSV) the chain is on the extracellular side. An N-linked (GlcNAc...) asparagine glycan is attached at Asn803. A helical membrane pass occupies residues 807-821 (LRSFRLLRVFKLAKS). Residues 822–838 (WPTLNTLIKIIGNSVGA) are Cytoplasmic-facing. A helical transmembrane segment spans residues 839–860 (LGNLTLVLAIIVFIFAVVGMQL). The Extracellular segment spans residues 861–886 (FGKNYSELRHRISDSGLLPRWHMMDF). Asn864 is a glycosylation site (N-linked (GlcNAc...) asparagine). Positions 887-905 (FHAFLIIFRILCGEWIETM) form an intramembrane region, pore-forming. At 906-914 (WDCMEVSGQ) the chain is on the extracellular side. Cys908 and Cys917 are disulfide-bonded. A helical membrane pass occupies residues 915-943 (SLCLLVFLLVMVIGNLVVLNLFLALLLSS). The Cytoplasmic portion of the chain corresponds to 944 to 1205 (FSADNLTAPD…LRKTCYRIVE (262 aa)). Residues 1000–1144 (HSQLPSCIAA…EDSYSEGSTA (145 aa)) are disordered. The span at 1017–1036 (EVEKAPPARKETRFEEDKRP) shows a compositional bias: basic and acidic residues. Residues 1056–1075 (SDTDDQEEDEENSLGTEEEE) are compositionally biased toward acidic residues. Over residues 1098–1115 (SQVSETTSSEAEASTSQA) the composition is skewed to low complexity. Residues 1189 to 1503 (PGKVWWRLRK…KKYYNAMKKL (315 aa)) form an III repeat. A helical membrane pass occupies residues 1206–1227 (HSWFETFIIFMILLSSGALAFE). Topologically, residues 1228–1238 (DIYLEERKTIK) are extracellular. Residues 1239 to 1261 (VLLEYADKMFTYVFVLEMLLKWV) traverse the membrane as a helical segment. Residues 1262–1270 (AYGFKKYFT) lie on the Cytoplasmic side of the membrane. Residues 1271–1293 (NAWCWLDFLIVDVSLVSLVANTL) form a helical membrane-spanning segment. The Extracellular segment spans residues 1294–1299 (GFAEMG). Residues 1300–1319 (PIKSLRTLRALRPLRALSRF) traverse the membrane as a helical segment. Residues 1320-1332 (EGMRVVVNALVGA) lie on the Cytoplasmic side of the membrane. A helical transmembrane segment spans residues 1333 to 1357 (IPSIMNVLLVCLIFWLIFSIMGVNL). The Extracellular portion of the chain corresponds to 1358–1402 (FAGKFGRCINQTEGDLPLNYTIVNNKSECESFNVTGELYWTKVKV). Asn1367, Asn1376, Asn1382, and Asn1390 each carry an N-linked (GlcNAc...) asparagine glycan. The pore-forming intramembrane region spans 1403–1424 (NFDNVGAGYLALLQVATFKGWM). The Extracellular portion of the chain corresponds to 1425-1447 (DIMYAAVDSRGYEEQPQWEDNLY). A helical transmembrane segment spans residues 1448-1472 (MYIYFVVFIIFGSFFTLNLFIGVII). Topologically, residues 1473-1530 (DNFNQQKKKLGGQDIFMTEEQKKYYNAMKKLGSKKPQKPIPRPLNKYQGFIFDIVTKQ) are cytoplasmic. At Ser1505 the chain carries Phosphoserine; by PKC. An IV repeat occupies 1512 to 1809 (IPRPLNKYQG…WEKFDPEATQ (298 aa)). Residues 1531–1549 (AFDVTIMFLICLNMVTMMV) form a helical membrane-spanning segment. Topologically, residues 1550-1560 (ETDDQSPEKVN) are extracellular. A helical membrane pass occupies residues 1561–1582 (ILAKINLLFVAIFTGECIVKMA). Over 1583 to 1591 (ALRHYYFTN) the chain is Cytoplasmic. Residues 1592–1614 (SWNIFDFVVVILSIVGTVLSDII) traverse the membrane as a helical segment. Topologically, residues 1615–1621 (QKYFFSP) are extracellular. The helical transmembrane segment at 1622-1642 (TLFRVIRLARIGRILRLIRGA) threads the bilayer. The Cytoplasmic portion of the chain corresponds to 1643–1652 (KGIRTLLFAL). The chain crosses the membrane as a helical span at residues 1653–1681 (MMSLPALFNIGLLLFLVMFIYSIFGMANF). Topologically, residues 1682–1699 (AYVKWEAGIDDMFNFQTF) are extracellular. The segment at residues 1700 to 1716 (ANSMLCLFQITTSAGWD) is an intramembrane region (pore-forming). At 1717–1747 (GLLSPILNTGPPYCDPNLPNSNGSRGNCGSP) the chain is on the extracellular side. Residues 1748-1773 (AVGILFFTTYIIISFLIVVNMYIAII) form a helical membrane-spanning segment. Residues 1774–2019 (LENFSVATEE…SPDRDRESIV (246 aa)) lie on the Cytoplasmic side of the membrane. Residues 1841–1903 (DLPMVSGDRI…ITTTLRRKHE (63 aa)) are interaction with FGF13. Residues 1903–1932 (EEVSATVIQRAFRRHLLQRSVKHASFLFRQ) form the IQ domain. Residues 1963 to 1982 (SGPLSSSSISSTSFPPSYDS) are compositionally biased toward low complexity. The tract at residues 1963-2019 (SGPLSSSSISSTSFPPSYDSVTRATSDNLPVRASDYSRSEDLADFPPSPDRDRESIV) is disordered. The interaction with NEDD4, NEDD4L and WWP2 stretch occupies residues 1977 to 1980 (PPSY).

This sequence belongs to the sodium channel (TC 1.A.1.10) family. Nav1.5/SCN5A subfamily. As to quaternary structure, cannot form the same regulatory interactions with beta subunits as other Navs do. Interacts with the PDZ domain of the syntrophin SNTA1, SNTB1 and SNTB2. Interacts with NEDD4, NEDD4L, WWP2 and GPD1L. Interacts with CALM. Interacts with FGF13; the interaction is direct and may regulate SNC5A density at membranes and function. Interacts with FGF12 and FGF14. Interacts with ANK3. Interacts with PKP2 (via N-terminus). Interacts with TMEM233. Interacts with XIRP2; the interaction is required for normal action potential configuration in the heart. In terms of processing, phosphorylation at Ser-1505 by PKC in a highly conserved cytoplasmic loop slows inactivation of the sodium channel and reduces peak sodium currents. Regulated through phosphorylation by CaMK2D. Ubiquitinated by NEDD4L; which promotes its endocytosis. Does not seem to be ubiquitinated by NEDD4 or WWP2. Post-translationally, lacks the cysteine which covalently binds the conotoxin GVIIJ. This cysteine (position 868) is speculated in other sodium channel subunits alpha to be implied in covalent binding with the sodium channel subunit beta-2 or beta-4. In terms of processing, N-glycosylated at Asn-318, probably hinders potential interaction with regulatory subunits. Expressed in the myocardium (at protein level).

Its subcellular location is the cell membrane. It is found in the cytoplasm. The protein localises to the perinuclear region. It localises to the sarcolemma. The protein resides in the T-tubule. Its subcellular location is the cell junction. The catalysed reaction is Na(+)(in) = Na(+)(out). Channel inactivation is regulated by intracellular calcium levels. It is a tetrodotoxin-resistant voltage-gated Na(+) channel (Nav). Its function is as follows. Pore-forming subunit of Nav1.5, a voltage-gated sodium (Nav) channel that directly mediates the depolarizing phase of action potentials in excitable membranes. Navs, also called VGSCs (voltage-gated sodium channels) or VDSCs (voltage-dependent sodium channels), operate by switching between closed and open conformations depending on the voltage difference across the membrane. In the open conformation they allow Na(+) ions to selectively pass through the pore, along their electrochemical gradient. The influx of Na(+) ions provokes membrane depolarization, initiating the propagation of electrical signals throughout cells and tissues. Nav1.5 is the predominant sodium channel expressed in myocardial cells and it is responsible for the initial upstroke of the action potential in cardiac myocytes, thereby initiating the heartbeat. Required for normal electrical conduction including formation of the infranodal ventricular conduction system and normal action potential configuration, as a result of its interaction with XIRP2. The polypeptide is Sodium channel protein type 5 subunit alpha (Mus musculus (Mouse)).